The sequence spans 890 residues: MSASSSRQLFDCGSLDWPNKSLFGDPTTRDVMHEHISSTWNAVIRRHMLAPNADAETILGRDGLPSAQFDAYGAMLPSFIQALNAPTTRLRITHRCPTAESILCADASHAPWLYMANNVCAYEATHLKPVQTFIAFDFAHGYCYLSLFIPLSFRITFENARSFSRFLEQLPDILGAYPTLAAIYKTMLFAIRLFPEVLQAPIPIIAKRPGVLQFHVSDARGLPPSWFPMKCGSVRSFVALITNNLNSDLLDGIVGSNGDGEHYTNWNSGHDHWIVNRFITVRDLHSSLKSALDVDLDTEGGRNAVLDLLLDLGVTNLVRREKRFPAHFQGAESVYLLLSCERVGNELVAVQDALQEPLANHSGLDLRALIINLGGLPSRHSDICYTRNIFENDNHLVWNFEFYRIASITRNAQIDRDMLSSSMANLFSNFVSESSNGQYRVKEPRPIAQYRVEHDEPVASGAPSAWWQVLIGITTAILGAIIFFLWRCFLRAKRVKFQAKDSFPWFTTSGDDDSPPPPGDSPSHPPGRSPDRVLPRTVVRDLSFNDDDDLHSVDLDEAGSRFGEVVSLIARGNLRELAGAIPESLSNLTLLQTSASGSGFYTMVALYLATLGDAITAFHEHNDASPTTTQSLRTVELQLEARGLRFNEAGTPANLIQRGVNSSVGRALVRLTQSALLATGEKFRTRMATTLERIAAERLNTLTAYDQRVIEMTTELLAAIKTALEVERSELTPHLANAEALLQVYNNLFSTDYASASLLALRREMILRSAEGRVGEQPTSASDAANEELVQRSMTKLDKEIELFQAQIDSQRRAVTITEASNLRENILQPINTVANIAMAGAFLRGGARHRMPGMPDVAAPMPNPFRAFSGRGHSLTTTRSGGLFRRPRV.

Positions 135-255 constitute a Peptidase C6 domain; sequence AFDFAHGYCY…NSDLLDGIVG (121 aa). Active-site for helper component proteinase activity residues include C143 and H215. The disordered stretch occupies residues 507 to 533; it reads TTSGDDDSPPPPGDSPSHPPGRSPDRV. Pro residues predominate over residues 515 to 528; it reads PPPPGDSPSHPPGR.

Belongs to the bymoviruses polyprotein 2 family. Post-translationally, the viral RNA2 of bymoviruses is expressed as a single polyprotein which undergoes post-translational proteolytic processing resulting in the production of at least two individual proteins. The HC-pro cleaves its C-terminus autocatalytically (Potential).

It carries out the reaction Hydrolyzes a Gly-|-Gly bond at its own C-terminus, commonly in the sequence -Tyr-Xaa-Val-Gly-|-Gly, in the processing of the potyviral polyprotein.. This chain is Genome polyprotein 2 (RNA2), found in Hordeum vulgare (Barley).